A 336-amino-acid polypeptide reads, in one-letter code: MNSTPANSTPLPPLQPFTPGSSAATPAPIALTRSKPRRRLSSNVVGVSDRRRLLQMLQNVEEVSPGPDSASEAGESPSIRSQDEAHLEHLSSARICMDEDKELLIHQALPAFENTLLRFVQALSKYDFRQDLAETLMETESQFCEAVDELVEHQQAAQTIAALERVSEGLDDKIRDMIRKLAECRRELRNYQPNNENQSTLSSADLLTYATRIANFTTAPPYFRERPEHSKLPWPIEDEMRKGLLALMEVGKDKTELGELADPEKFAHTAANGVAPNGAAPVANGVAQNHNNGYAMERRLSTGYGSDNDGDTNMNGRSGLAGLDIFDDDDDDDDDD.

Disordered regions lie at residues 1-45 and 59-85; these read MNST…SNVV and NVEE…QDEA. Residues 154 to 192 adopt a coiled-coil conformation; it reads QQAAQTIAALERVSEGLDDKIRDMIRKLAECRRELRNYQ. The segment at 281 to 336 is disordered; sequence PVANGVAQNHNNGYAMERRLSTGYGSDNDGDTNMNGRSGLAGLDIFDDDDDDDDDD. Residues 325 to 336 are compositionally biased toward acidic residues; that stretch reads IFDDDDDDDDDD.

Belongs to the Mediator complex subunit 4 family. Component of the Mediator complex.

Its subcellular location is the nucleus. Component of the Mediator complex, a coactivator involved in the regulated transcription of nearly all RNA polymerase II-dependent genes. Mediator functions as a bridge to convey information from gene-specific regulatory proteins to the basal RNA polymerase II transcription machinery. Mediator is recruited to promoters by direct interactions with regulatory proteins and serves as a scaffold for the assembly of a functional preinitiation complex with RNA polymerase II and the general transcription factors. In Yarrowia lipolytica (strain CLIB 122 / E 150) (Yeast), this protein is Mediator of RNA polymerase II transcription subunit 4 (MED4).